The following is a 320-amino-acid chain: Methionyl-tRNA formyltransferase (320 aa).

114 to 117 (SLLP) is a binding site for (6S)-5,6,7,8-tetrahydrofolate.

Belongs to the Fmt family.

It catalyses the reaction L-methionyl-tRNA(fMet) + (6R)-10-formyltetrahydrofolate = N-formyl-L-methionyl-tRNA(fMet) + (6S)-5,6,7,8-tetrahydrofolate + H(+). In terms of biological role, attaches a formyl group to the free amino group of methionyl-tRNA(fMet). The formyl group appears to play a dual role in the initiator identity of N-formylmethionyl-tRNA by promoting its recognition by IF2 and preventing the misappropriation of this tRNA by the elongation apparatus. In Acinetobacter baumannii (strain AB307-0294), this protein is Methionyl-tRNA formyltransferase.